Reading from the N-terminus, the 257-residue chain is Dihydroorotate dehydrogenase B (NAD(+)), electron transfer subunit (257 aa).

The FAD-binding FR-type domain occupies 2–102 (IGRERMTVAS…LGPLGNGFPL (101 aa)). FAD contacts are provided by residues 53-56 (RPLS), 70-72 (IYR), and 77-78 (GT). The [2Fe-2S] cluster site is built by C221, C226, C229, and C244.

This sequence belongs to the PyrK family. As to quaternary structure, heterotetramer of 2 PyrK and 2 PyrD type B subunits. [2Fe-2S] cluster is required as a cofactor. The cofactor is FAD.

It functions in the pathway pyrimidine metabolism; UMP biosynthesis via de novo pathway; orotate from (S)-dihydroorotate (NAD(+) route): step 1/1. Responsible for channeling the electrons from the oxidation of dihydroorotate from the FMN redox center in the PyrD type B subunit to the ultimate electron acceptor NAD(+). In Bacillus caldolyticus, this protein is Dihydroorotate dehydrogenase B (NAD(+)), electron transfer subunit.